Here is a 274-residue protein sequence, read N- to C-terminus: 26S proteasome regulatory subunit RPN12 (274 aa).

Residues 76-251 enclose the PCI domain; that stretch reads DSFENYFNQL…KADYEDEMMH (176 aa).

The protein belongs to the proteasome subunit S14 family.

Functionally, acts as a regulatory subunit of the 26S proteasome which is involved in the ATP-dependent degradation of ubiquitinated proteins. Necessary for activation of the CDC28 kinase. This Saccharomyces cerevisiae (strain ATCC 204508 / S288c) (Baker's yeast) protein is 26S proteasome regulatory subunit RPN12 (RPN12).